We begin with the raw amino-acid sequence, 282 residues long: MSKGWRKLFVSRGDGTKNSLKKTLKVPEVRSPLLTNFHRWAGKERVLKLTDKEQVTEAVGNSSWDLSKNLFANLLASPMRSDKASRFKFPRDLLIQMKLVQTGNENPGKLATLMPLINMKSGKSSSYVANSLKIFKGKKPGLGQLVPTAVNDSGIANISLSDIVLDKSLFTEKHQEELLQCIENCMTQLVDRRKSSVPVVVEDWDVVLTYDHNNDNDIELVRLKQLPKDPTVIILNLKVVENDSIRALINDKLKNHEVGVVLKFLKDERLIRLVYSLLNFSK.

It belongs to the RRG8 family.

The protein resides in the mitochondrion. In terms of biological role, required for respiratory activity and maintenance and expression of the mitochondrial genome. This is Required for respiratory growth protein 8, mitochondrial (RRG8) from Kluyveromyces lactis (strain ATCC 8585 / CBS 2359 / DSM 70799 / NBRC 1267 / NRRL Y-1140 / WM37) (Yeast).